The sequence spans 469 residues: Zinc transporter SLC39A7 (469 aa).

Residues 5–25 (LGAPHWVAVGLLTWAALGLLV) form a helical membrane-spanning segment. Composition is skewed to basic and acidic residues over residues 43–56 (HGHS…DFHH) and 66–114 (HTHE…EHSH). The tract at residues 43–122 (HGHSHRRSHE…SHGGYGESGA (80 aa)) is disordered. His-66 carries the pros-methylhistidine modification. 3 helical membrane passes run 138-158 (ALGA…LIPV), 169-189 (LQIL…LHLI), and 214-234 (GPIL…LVVE). Over residues 242–255 (GGHGHSHGHGHTHG) the composition is skewed to basic residues. A disordered region spans residues 242 to 313 (GGHGHSHGHG…QNSEEEKTGS (72 aa)). Residues 256–266 (HTQGSHGHGTQ) show a composition bias toward low complexity. Phosphoserine is present on residues Ser-275 and Ser-276. Basic and acidic residues predominate over residues 295–313 (RLKDGPLRPQNSEEEKTGS). The next 3 membrane-spanning stretches (helical) occupy residues 386–406 (LTAI…GGAV), 417–437 (GWVL…SVLP), and 448–468 (SLLE…IAHL).

This sequence belongs to the ZIP transporter (TC 2.A.5) family. KE4/Catsup subfamily. In terms of assembly, homodimer. Methylation at some His residue by METTL9 leads to reduced zinc-binding. In terms of processing, rapidly phosphorylated by CK2 following Zn(2+) treatment. This phosphorylation is required for efficient cytosolic Zn(2+) release.

It is found in the endoplasmic reticulum membrane. The protein resides in the golgi apparatus. The protein localises to the cis-Golgi network membrane. The catalysed reaction is Zn(2+)(in) = Zn(2+)(out). Its function is as follows. Transports Zn(2+) from the endoplasmic reticulum (ER)/Golgi apparatus to the cytosol, playing an essential role in the regulation of cytosolic zinc levels. Acts as a gatekeeper of zinc release from intracellular stores, requiring post-translational activation by phosphorylation, resulting in activation of multiple downstream pathways leading to cell growth and proliferation. Has an essential role in B cell development and is required for proper B cell receptor signaling. Plays an important role in maintaining intestinal epithelial homeostasis and skin dermis development by regulating ER function. Controls cell signaling pathways involved in glucose metabolism in skeletal muscle. Has a protective role against ER stress in different biological contexts. Mediates Zn(2+)-induced ferroptosis. This is Zinc transporter SLC39A7 from Canis lupus familiaris (Dog).